Here is a 501-residue protein sequence, read N- to C-terminus: Bifunctional pantoate ligase/cytidylate kinase (501 aa).

Positions 1-264 are pantoate--beta-alanine ligase; the sequence is MLSTQAELAA…CGTTRLIDHS (264 aa). 25 to 32 contributes to the ATP binding site; that stretch reads MGGLHQGH. The active-site Proton donor is His32. Gln55 contacts (R)-pantoate. Position 55 (Gln55) interacts with beta-alanine. 144 to 147 is a binding site for ATP; the sequence is GEKD. (R)-pantoate is bound at residue Gln150. ATP contacts are provided by residues Val173 and 181–184; that span reads LSSR. The segment at 265 to 501 is cytidylate kinase; the sequence is FLMTRQPLVA…PEEAWPTPAG (237 aa).

It in the N-terminal section; belongs to the pantothenate synthetase family. This sequence in the C-terminal section; belongs to the cytidylate kinase family. Type 1 subfamily.

It localises to the cytoplasm. It catalyses the reaction (R)-pantoate + beta-alanine + ATP = (R)-pantothenate + AMP + diphosphate + H(+). The enzyme catalyses CMP + ATP = CDP + ADP. The catalysed reaction is dCMP + ATP = dCDP + ADP. Its pathway is cofactor biosynthesis; (R)-pantothenate biosynthesis; (R)-pantothenate from (R)-pantoate and beta-alanine: step 1/1. Catalyzes the condensation of pantoate with beta-alanine in an ATP-dependent reaction via a pantoyl-adenylate intermediate. Its function is as follows. Catalyzes the transfer of a phosphate group from ATP to either CMP or dCMP to form CDP or dCDP and ADP, respectively. This Parasynechococcus marenigrum (strain WH8102) protein is Bifunctional pantoate ligase/cytidylate kinase.